The chain runs to 448 residues: Packaging protein 1 (448 aa).

A disordered region spans residues 1–76 (METKGRRSAA…SQPAKRGGLL (76 aa)). Residues 22-31 (PRKRPTRRAP) show a composition bias toward basic residues. The span at 56–67 (RPSSDSLLQEPS) shows a compositional bias: polar residues. 171 to 178 (GPTGCGKS) lines the ATP pocket. The segment at 440–448 (RAYRARKIK) is DNA-binding.

The protein belongs to the adenoviridae packaging protein 1 family. As to quaternary structure, homodimer. Part of a genome packaging complex composed of packaging proteins 1, 2 and 3; this complex specifically binds to the packaging sequence on the left end of viral genomic DNA and performs packaging of the viral genome. Interacts with protein 33K.

It localises to the virion. Its subcellular location is the host nucleus. The protein localises to the host nucleoplasm. It is found in the host nucleolus. Component of the packaging machinery which encapsidates the viral DNA into preformed capsids and transcriptional activator of the viral major late promoter (MLP). Binds, along with packaging proteins 2 and 3, to the specific packaging sequence on the left end of viral genomic DNA and displays ATPase activity thereby providing the power stroke of the packaging machinery. The activity of packaging protein IVa2 is stimulated by protein 33K which acts as a terminase. May be the protein that pumps DNA into the capsid powered by ATP hydrolysis. Specifically binds to the 5'-CG-3' nucleotides of the repeats making up the packaging sequence. Component of the DEF-A and DEF-B transcription factors that bind downstream elements of the major late promoter (MLP), and stimulate transcription from the MLP after initiation of viral DNA replication. DEF-A is a heterodimer packaging proteins 1 and 2 and DEF-B is a homodimer of packaging protein 1. The sequence is that of Packaging protein 1 from Human adenovirus B serotype 7 (HAdV-7).